The sequence spans 117 residues: Minor capsid protein VP2 (117 aa).

This sequence belongs to the lagovirus VP2 protein family. Homooligomer. The portal-like structure consists in 12 copies of VP2. Interacts with capsid protein VP1.

The protein resides in the virion. It is found in the host cytoplasm. Its function is as follows. Minor structural protein that forms a portal-like structure at a unique three-fold axis of symmetry, following binding to the host receptor. The channel formed by VP2 may allow the delivery of the viral genome through the host endosomal membrane. This is Minor capsid protein VP2 from Oryctolagus cuniculus (Rabbit).